Reading from the N-terminus, the 252-residue chain is MLKPKKTFGQNFLKSKNIAHSIVELLDVKEDDTVIEIGPGLGALTEFLYQKPKKELILVELDKDIFGLLEKKYKNATLLNEDASLVDLSSYKNLKIIGNLPYNMYASILINMINQEKHISKMVFMLQKEVGERLITDSKDKSWLWAYANTYFNIHYAFSVPGRFFEPVPKVTSCVLVFDKKEDTPSFEKQNYMDFLKKMFSNRRKMLKHKLNNIEDKYALKRVEELSLEDIKYIYNTLSCFNKNIFTSTPAL.

Residues N11, L13, G38, E60, D82, and N99 each contribute to the S-adenosyl-L-methionine site.

It belongs to the class I-like SAM-binding methyltransferase superfamily. rRNA adenine N(6)-methyltransferase family. RsmA subfamily.

The protein resides in the cytoplasm. The enzyme catalyses adenosine(1518)/adenosine(1519) in 16S rRNA + 4 S-adenosyl-L-methionine = N(6)-dimethyladenosine(1518)/N(6)-dimethyladenosine(1519) in 16S rRNA + 4 S-adenosyl-L-homocysteine + 4 H(+). Functionally, specifically dimethylates two adjacent adenosines (A1518 and A1519) in the loop of a conserved hairpin near the 3'-end of 16S rRNA in the 30S particle. May play a critical role in biogenesis of 30S subunits. This is Ribosomal RNA small subunit methyltransferase A from Hydrogenobaculum sp. (strain Y04AAS1).